The primary structure comprises 413 residues: Coiled-coil domain-containing protein 83 (413 aa).

Coiled coils occupy residues 32-186 (HCQI…RIIR) and 215-255 (IWEN…QLFN).

This chain is Coiled-coil domain-containing protein 83 (CCDC83), found in Bos taurus (Bovine).